The following is a 249-amino-acid chain: Ribosomal RNA small subunit methyltransferase J (249 aa).

Residues 97 to 98 (RD), 113 to 114 (ER), and Asp-167 each bind S-adenosyl-L-methionine.

Belongs to the methyltransferase superfamily. RsmJ family.

It localises to the cytoplasm. The catalysed reaction is guanosine(1516) in 16S rRNA + S-adenosyl-L-methionine = N(2)-methylguanosine(1516) in 16S rRNA + S-adenosyl-L-homocysteine + H(+). Its function is as follows. Specifically methylates the guanosine in position 1516 of 16S rRNA. The chain is Ribosomal RNA small subunit methyltransferase J from Aeromonas salmonicida (strain A449).